A 419-amino-acid polypeptide reads, in one-letter code: Adenylosuccinate synthetase 1 (419 aa).

GTP is bound at residue 11-17 (GDEGKGK). Asp12 acts as the Proton acceptor in catalysis. Residues Asp12 and Gly39 each contribute to the Mg(2+) site. IMP contacts are provided by residues 12-15 (DEGK), 37-40 (NAGH), Arg138, Gln220, and Arg298. His40 serves as the catalytic Proton donor. 294 to 300 (TVSKRPR) is a substrate binding site. Residues Arg300, 326–328 (NVD), and 407–409 (SYG) each bind GTP.

Belongs to the adenylosuccinate synthetase family. As to quaternary structure, homodimer. The cofactor is Mg(2+).

The protein localises to the cytoplasm. It catalyses the reaction IMP + L-aspartate + GTP = N(6)-(1,2-dicarboxyethyl)-AMP + GDP + phosphate + 2 H(+). The protein operates within purine metabolism; AMP biosynthesis via de novo pathway; AMP from IMP: step 1/2. Functionally, plays an important role in the de novo pathway of purine nucleotide biosynthesis. Catalyzes the first committed step in the biosynthesis of AMP from IMP. This is Adenylosuccinate synthetase 1 from Photorhabdus laumondii subsp. laumondii (strain DSM 15139 / CIP 105565 / TT01) (Photorhabdus luminescens subsp. laumondii).